The primary structure comprises 754 residues: MTLNQLLQKLEATSPILQANFGIERESLRVDRQGQLVHTPHPSCLGARSFHPYIQTDFCEFQMELITPVAKSTTEARRFLGAITDVAGRSIATDEVLWPLSMPPRLKAEEIQVAQLENDFERHYRNYLAEKYGTKLQAISGIHYNMELGKDLVEALFQESDQTDMIAFKNALYLKLAQNYLRYRWVITYLFGASPIAEQGFFDQEVPEPMRSFRNSDHGYVNKEEIQVSFVSLEDYVSAIETYIEQGDLIAEKEFYSAVRFRGQKVNRSFLDKGITYLEFRNFDLNPFERIGISQTTMDTVHLLILAFLWLDSPENVDQALAQGHALNEKIALSHPLEPLPSEAKTQDIVTALDQLVQHFGLGDYHQDLVKQVKAAFADPNQTLSAQLLPYIKDKSLAEFALNKALAYHDYDWTAHYALKGYEEMELSTQMLLFDAIQKGIHFEILDEQDQFLKLWHQDHVEYVKNGNMTSKDNYVVPLAMANKTVTKKILADAGFPVPSGDEFTSLEEGLAYYPLIKDKQIVVKPKSTNFGLGISIFQEPASLDNYQKALEIAFAEDTSVLVEEFIPGTEYRFFILDGRCEAVLLRVAANVIGDGKHTIRELVAQKNANPLRGRDHRSPLEIIELGDIEQLMLAQQGYTPDDILPEGKKVNLRRNSNISTGGDSIDVTETMDSSYQELAAAMATSMGAWACGVDLIIPDETQIATKENPHCTCIELNFNPSMYMHTYCAEGPGQAITTKILDKLFPEIVAGQT.

The segment at Met1 to Ala332 is glutamate--cysteine ligase. The ATP-grasp domain occupies Lys488–Phe746. Position 515–573 (Pro515–Arg573) interacts with ATP. Mg(2+) contacts are provided by Asp695, Glu716, and Asn718. Asp695, Glu716, and Asn718 together coordinate Mn(2+).

It in the N-terminal section; belongs to the glutamate--cysteine ligase type 1 family. Type 2 subfamily. As to quaternary structure, monomer. Mg(2+) is required as a cofactor. Requires Mn(2+) as cofactor.

The enzyme catalyses L-cysteine + L-glutamate + ATP = gamma-L-glutamyl-L-cysteine + ADP + phosphate + H(+). The catalysed reaction is gamma-L-glutamyl-L-cysteine + glycine + ATP = glutathione + ADP + phosphate + H(+). The protein operates within sulfur metabolism; glutathione biosynthesis; glutathione from L-cysteine and L-glutamate: step 1/2. It participates in sulfur metabolism; glutathione biosynthesis; glutathione from L-cysteine and L-glutamate: step 2/2. In terms of biological role, synthesizes glutathione from L-glutamate and L-cysteine via gamma-L-glutamyl-L-cysteine. This chain is Glutathione biosynthesis bifunctional protein GshAB, found in Streptococcus thermophilus (strain CNRZ 1066).